The chain runs to 361 residues: Putative geranylgeranyl pyrophosphate synthase 8, chloroplastic (361 aa).

Residues 1-39 (MATTVHLSSFSLFIQSRGRRDNSISSVKSLKKRTGLSPS) constitute a chloroplast transit peptide. Residues 24–58 (ISSVKSLKKRTGLSPSSALTSQGGRDMIPPQGKSN) are disordered. Polar residues predominate over residues 36–46 (LSPSSALTSQG). Residues lysine 107, arginine 110, and histidine 139 each contribute to the isopentenyl diphosphate site. Mg(2+)-binding residues include aspartate 146 and aspartate 152. Arginine 157 is a binding site for dimethylallyl diphosphate. Arginine 158 contributes to the isopentenyl diphosphate binding site. 5 residues coordinate dimethylallyl diphosphate: lysine 246, threonine 247, glutamine 284, lysine 301, and lysine 311.

It belongs to the FPP/GGPP synthase family. Monomer. It depends on Mg(2+) as a cofactor.

Its subcellular location is the plastid. It is found in the chloroplast. The enzyme catalyses isopentenyl diphosphate + dimethylallyl diphosphate = (2E)-geranyl diphosphate + diphosphate. It catalyses the reaction isopentenyl diphosphate + (2E)-geranyl diphosphate = (2E,6E)-farnesyl diphosphate + diphosphate. It carries out the reaction isopentenyl diphosphate + (2E,6E)-farnesyl diphosphate = (2E,6E,10E)-geranylgeranyl diphosphate + diphosphate. The protein operates within isoprenoid biosynthesis; farnesyl diphosphate biosynthesis; farnesyl diphosphate from geranyl diphosphate and isopentenyl diphosphate: step 1/1. It functions in the pathway isoprenoid biosynthesis; geranyl diphosphate biosynthesis; geranyl diphosphate from dimethylallyl diphosphate and isopentenyl diphosphate: step 1/1. It participates in isoprenoid biosynthesis; geranylgeranyl diphosphate biosynthesis; geranylgeranyl diphosphate from farnesyl diphosphate and isopentenyl diphosphate: step 1/1. Functionally, catalyzes the trans-addition of the three molecules of IPP onto DMAPP to form geranylgeranyl pyrophosphate. This chain is Putative geranylgeranyl pyrophosphate synthase 8, chloroplastic, found in Arabidopsis thaliana (Mouse-ear cress).